Here is a 455-residue protein sequence, read N- to C-terminus: Putative RNA polymerase II subunit B1 CTD phosphatase rpap-2 (455 aa).

The segment at 36 to 121 adopts an RTR1-type zinc-finger fold; the sequence is EHLPHLHCLG…LDEHPLWITG (86 aa). 4 residues coordinate Zn(2+): C59, C64, C97, and C101.

This sequence belongs to the RPAP2 family.

The protein localises to the nucleus. The enzyme catalyses O-phospho-L-seryl-[protein] + H2O = L-seryl-[protein] + phosphate. The catalysed reaction is O-phospho-L-threonyl-[protein] + H2O = L-threonyl-[protein] + phosphate. Functionally, putative RNA polymerase II subunit B1 C-terminal domain (CTD) phosphatase involved in RNA polymerase II transcription regulation. The sequence is that of Putative RNA polymerase II subunit B1 CTD phosphatase rpap-2 from Caenorhabditis elegans.